The following is a 391-amino-acid chain: MVMFKKIKSFEVVFNDPEKVYGSGEKVAGRVIVEVCEVTRVKAVRILACGVAKVLWMQGSQQCKQTSEYLRYEDTLLLEDQPTGENEMVIMRPGNKYEYKFGFELPQGPLGTSFKGKYGCVDYWVKAFLDRPSQPTQGTKKNFEVVDLVDVNTPDLMAPVSAKKEKKVSCMFIPDGRVSVSARIDRKGFCEGDEISIHADFENTCSRIVVPKAAIVARHTYLANGQTKVLTQELSSVRGNHIISGTCASWRGKSLRVQKIRPSILGCNILRVEYSLLIYVSVPGSKKVILDLPLVIGSRSGLSSRTSSMASRTSSEMSWVDLNIPDTPEAPPCYMDIIPEDHRLESPTTPLLDDMDGSQDSPIFMYAPEFKFMPPPTYTEVDPCILNNNVQ.

Lysine 212 participates in a covalent cross-link: Glycyl lysine isopeptide (Lys-Gly) (interchain with G-Cter in ubiquitin). A Phosphoserine modification is found at serine 361.

This sequence belongs to the arrestin family. Homodimer; disulfide-linked. Interacts with TXN/thioredoxin through its redox-active site. Interacts with transcriptional repressors ZBTB16, ZBTB32 and HDAC1. Interacts with DDIT4. Post-translationally, ubiquitinated; undergoes heterotypic 'Lys-48'-/'Lys-63'-branched polyubiquitination catalyzed by ITCH and UBR5 resulting in proteasomal degradation. Deubiquitinated by USP5, leading to TXNIP stabilization.

It is found in the cytoplasm. Its function is as follows. May act as an oxidative stress mediator by inhibiting thioredoxin activity or by limiting its bioavailability. Interacts with COPS5 and restores COPS5-induced suppression of CDKN1B stability, blocking the COPS5-mediated translocation of CDKN1B from the nucleus to the cytoplasm. Functions as a transcriptional repressor, possibly by acting as a bridge molecule between transcription factors and corepressor complexes, and over-expression will induce G0/G1 cell cycle arrest. Required for the maturation of natural killer cells. Acts as a suppressor of tumor cell growth. Inhibits the proteasomal degradation of DDIT4, and thereby contributes to the inhibition of the mammalian target of rapamycin complex 1 (mTORC1). The polypeptide is Thioredoxin-interacting protein (TXNIP) (Pongo abelii (Sumatran orangutan)).